A 393-amino-acid polypeptide reads, in one-letter code: Exosome complex component RRP45 (393 aa).

Positions 1–268 (MRDTPLSNCE…SEITELINKA (268 aa)) are ARE binding.

It belongs to the RNase PH family. Component of the RNA exosome complex.

It localises to the cytoplasm. The protein resides in the nucleus. Its subcellular location is the nucleolus. The protein localises to the nucleoplasm. Non-catalytic component of the RNA exosome complex which has 3'-&gt;5' exoribonuclease activity and participates in a multitude of cellular RNA processing and degradation events. In the nucleus, the RNA exosome complex is involved in proper maturation of stable RNA species such as rRNA, snRNA and snoRNA, in the elimination of RNA processing by-products and non-coding 'pervasive' transcripts, such as antisense RNA species and promoter-upstream transcripts (PROMPTs), and of mRNAs with processing defects, thereby limiting or excluding their export to the cytoplasm. In the cytoplasm, the RNA exosome complex is involved in general mRNA turnover and specifically degrades inherently unstable mRNAs containing AU-rich elements (AREs) within their 3' untranslated regions, and in RNA surveillance pathways, preventing translation of aberrant mRNAs. The chain is Exosome complex component RRP45 from Danio rerio (Zebrafish).